The sequence spans 267 residues: MKRHFETTRRIVIKVGTSSLVQTSGKINLSKIDHLAFVISSLMNRGMEVILVSSGAMGFGLDILKMDKRPQEISQQQAVSSVGQVAMMSLYSQIFSHYQTHVSQILLTRDVVVFPESLQNVTNSFESLLSMGILPIVNENDAVSVDEMDHKTKFGDNDRLSAVVAKITKADLLIMLSDIDGLFDKNPNIYDDAVLRSHVSEITDDIIKSAGGAGSKFGTGGMLSKIKSAQMVFDNNGQMILMNGANPRDILKVLDGHNIGTYFAQGK.

Lys14 contributes to the ATP binding site. Positions 54, 141, and 157 each coordinate substrate. Residues 177 to 178 (SD) and 219 to 225 (TGGMLSK) contribute to the ATP site.

The protein belongs to the glutamate 5-kinase family.

It localises to the cytoplasm. The enzyme catalyses L-glutamate + ATP = L-glutamyl 5-phosphate + ADP. It participates in amino-acid biosynthesis; L-proline biosynthesis; L-glutamate 5-semialdehyde from L-glutamate: step 1/2. Functionally, catalyzes the transfer of a phosphate group to glutamate to form L-glutamate 5-phosphate. The sequence is that of Glutamate 5-kinase from Streptococcus agalactiae serotype Ia (strain ATCC 27591 / A909 / CDC SS700).